We begin with the raw amino-acid sequence, 2181 residues long: Non-reducing polyketide synthase subA (2181 aa).

The segment at 74-180 (QWVKGNSTQP…LALCCGAYID (107 aa)) is N-terminal acylcarrier protein transacylase domain (SAT). The region spanning 347–779 (QAQLLVLGPV…GTNAAMLVCQ (433 aa)) is the Ketosynthase family 3 (KS3) domain. Active-site for beta-ketoacyl synthase activity residues include Cys-525, His-661, and His-702. The segment at 891–1193 (VLAGQTGRRV…SFYPAALGEP (303 aa)) is malonyl-CoA:ACP transacylase (MAT) domain. The active-site For acyl/malonyl transferase activity is the Ser-977. An N-terminal hotdog fold region spans residues 1269–1401 (VSLIGKTQNA…GVITLQEVYS (133 aa)). The PKS/mFAS DH domain maps to 1269 to 1579 (VSLIGKTQNA…FQKIAISSLK (311 aa)). Residues 1276–1573 (QNAGVQTVEY…TILGAKFQKI (298 aa)) form a product template (PT) domain region. Positions 1425–1579 (SASVVQGDFI…FQKIAISSLK (155 aa)) are C-terminal hotdog fold. Positions 1652 to 1673 (ISGSSRSTSSSPPSLESRSQAM) are disordered. Positions 1653–1670 (SGSSRSTSSSPPSLESRS) are enriched in low complexity. The region spanning 1677–1753 (EITEGAGSAL…TLFHTIFPQQ (77 aa)) is the Carrier domain. Position 1713 is an O-(pantetheine 4'-phosphoryl)serine (Ser-1713). The interval 1982–2164 (EFMNCLFSYN…QSGFGHVDWT (183 aa)) is methyltransferase (CMeT) domain.

The protein operates within secondary metabolite biosynthesis; terpenoid biosynthesis. Functionally, non-reducing polyketide synthase; part of the gene cluster that mediates the biosynthesis of the immunosuppressants subglutinols, meroterpenoids consisting of an alpha-pyrone (4-hydroxy-5,6-dimethyl-2-pyrone) moiety attached to a decalin core fused to a five-membered cyclic ether carrying a prenylside chain. The first step of the pathway is the synthesis of the alpha-pyrone moiety by the polyketide synthase subA via condensation of one acetyl-CoA starter unit with 3 malonyl-CoA units and 2 methylations. The alpha-pyrone is then combined with geranylgeranyl pyrophosphate (GGPP) formed by the GGPP synthase subD through the action of the prenyltransferase subC to yield a linear alpha-pyrone diterpenoid. Subsequent steps in the subglutinol biosynthetic pathway involve the decalin core formation, which is thought to be initiated by the epoxidation of the C10-C11 olefin by the FAD-dependent oxidoreductase subE. The following cyclization cascade would be catalyzed by the terpene cyclase subB. Lastly, the FAD-dependent dehydrogenase subF probably catalyzes the five-membered cyclic ether formation to complete the formation of subglutinol A. Subsequent redox reactions appear to give rise to subglutinol C and D, however, it remains unclear which enzymes are responsible for these transformations. SubD may have secondary function in the conversion of the identified subglutinols to subglutinol analog 45, which seems to be the major product of the cluster. This Metarhizium robertsii (strain ARSEF 23 / ATCC MYA-3075) (Metarhizium anisopliae (strain ARSEF 23)) protein is Non-reducing polyketide synthase subA.